A 424-amino-acid polypeptide reads, in one-letter code: L-glutamine:2-deoxy-scyllo-inosose aminotransferase (424 aa).

K202 carries the N6-(pyridoxal phosphate)lysine modification.

This sequence belongs to the DegT/DnrJ/EryC1 family. L-glutamine:2-deoxy-scyllo-inosose/scyllo-inosose aminotransferase subfamily. Pyridoxal 5'-phosphate is required as a cofactor.

It carries out the reaction 2-deoxy-L-scyllo-inosose + L-glutamine = 2-deoxy-scyllo-inosamine + 2-oxoglutaramate. The catalysed reaction is 3-amino-2,3-dideoxy-scyllo-inosose + L-glutamine = 2-deoxystreptamine + 2-oxoglutaramate. It functions in the pathway metabolic intermediate biosynthesis; 2-deoxystreptamine biosynthesis; 2-deoxystreptamine from D-glucose 6-phosphate: step 2/4. Its pathway is metabolic intermediate biosynthesis; 2-deoxystreptamine biosynthesis; 2-deoxystreptamine from D-glucose 6-phosphate: step 4/4. The protein operates within antibiotic biosynthesis; ribostamycin biosynthesis. Functionally, catalyzes the PLP-dependent transamination of 2-deoxy-scyllo-inosose (2-DOI) to form 2-deoxy-scyllo-inosamine (2-DOIA) using L-glutamine as the amino donor. Also catalyzes the transamination of 3-amino-2,3-dideoxy-scyllo-inosose (keto-2-DOIA) into 2-deoxystreptamine (2-DOS). The protein is L-glutamine:2-deoxy-scyllo-inosose aminotransferase (rbmB) of Streptomyces ribosidificus.